The sequence spans 735 residues: Trafficking protein particle complex subunit 12 (735 aa).

2 disordered regions span residues 1-204 (MEDA…QPSP) and 237-276 (NPGA…PPAS). Residues 13-22 (PEAPHPPQLA) are compositionally biased toward pro residues. Residues 34 to 50 (ETIDLGGDEFGSEENET) are compositionally biased toward acidic residues. 2 positions are modified to phosphoserine: S109 and S184. 4 TPR repeats span residues 545 to 578 (GRVM…YPEQ), 580 to 613 (PQLL…TQKL), 620 to 653 (IMVL…DPRN), and 654 to 687 (AVAN…DPRH).

Component of the multisubunit TRAPP (transport protein particle) complex, which includes at least TRAPPC2, TRAPPC2L, TRAPPC3, TRAPPC3L, TRAPPC4, TRAPPC5, TRAPPC8, TRAPPC9, TRAPPC10, TRAPPC11 and TRAPPC12. Interacts with CENPE. Post-translationally, phosphorylated as the cells enter mitosis but is dephosphorylated at or before the onset of anaphase. The phosphorylated form recruits CENPE to kinetochores more efficiently than the non-phosphorylated form.

Its subcellular location is the endoplasmic reticulum-Golgi intermediate compartment. It is found in the nucleus. In terms of biological role, component of the TRAPP complex, which is involved in endoplasmic reticulum to Golgi apparatus trafficking at a very early stage. Also plays a role in chromosome congression, kinetochore assembly and stability and controls the recruitment of CENPE to the kinetochores. The sequence is that of Trafficking protein particle complex subunit 12 from Homo sapiens (Human).